The primary structure comprises 274 residues: Protein FRG1 homolog (274 aa).

Positions 20-36 (KKNLFKVGKEKKKKNKD) match the Nuclear localization signal motif. A disordered region spans residues 27–46 (GKEKKKKNKDDKEKIDPDTV). The span at 34–43 (NKDDKEKIDP) shows a compositional bias: basic and acidic residues. A Bipartite nuclear localization signal motif is present at residues 252 to 268 (QADGSAHELLLDRRMKM).

Belongs to the FRG1 family.

The protein resides in the nucleus. Its subcellular location is the cajal body. The protein localises to the nucleolus. It localises to the cytoplasm. Binds to mRNA in a sequence-independent manner. May play a role in regulation of pre-mRNA splicing or in the assembly of rRNA into ribosomal subunits. May be involved in mRNA transport. May be involved in epigenetic regulation of muscle differentiation through regulation of activity of the histone-lysine N-methyltransferase KMT5B. This Caenorhabditis elegans protein is Protein FRG1 homolog (frg-1).